Reading from the N-terminus, the 609-residue chain is Tyrosyl-DNA phosphodiesterase 1 (609 aa).

Polar residues predominate over residues 1–12; it reads MSQESSYGKWTI. The interval 1-155 is disordered; sequence MSQESSYGKW…YETSGEGQDI (155 aa). Serine 61 bears the Phosphoserine mark. Positions 105–118 are enriched in basic and acidic residues; sequence QPKRVLPQEKKHVS. Phosphoserine is present on residues serine 119 and serine 132. Residue threonine 148 is modified to Phosphothreonine. Residue serine 149 is modified to Phosphoserine. The active-site Nucleophile is histidine 264. Residue lysine 266 participates in substrate binding. Residues 401-404 form an interaction with DNA region; the sequence is SIGS. Residue histidine 494 is the Proton donor/acceptor of the active site. Lysine 496 serves as a coordination point for substrate.

Belongs to the tyrosyl-DNA phosphodiesterase family. In terms of assembly, monomer. As to expression, ubiquitous.

It is found in the nucleus. Its subcellular location is the cytoplasm. Its function is as follows. DNA repair enzyme that can remove a variety of covalent adducts from DNA through hydrolysis of a 3'-phosphodiester bond, giving rise to DNA with a free 3' phosphate. Catalyzes the hydrolysis of dead-end complexes between DNA and the topoisomerase I active site tyrosine residue. Hydrolyzes 3'-phosphoglycolates on protruding 3' ends on DNA double-strand breaks due to DNA damage by radiation and free radicals. Acts on blunt-ended double-strand DNA breaks and on single-stranded DNA. Has low 3'exonuclease activity and can remove a single nucleoside from the 3'end of DNA and RNA molecules with 3'hydroxyl groups. Has no exonuclease activity towards DNA or RNA with a 3'phosphate. This is Tyrosyl-DNA phosphodiesterase 1 (Tdp1) from Mus musculus (Mouse).